Reading from the N-terminus, the 1699-residue chain is Cilia- and flagella-associated protein 61 (1699 aa).

A compositionally biased stretch (polar residues) spans 1 to 22 (MYSNNQLDNPNHSRSQYRNGDQ). 3 disordered regions span residues 1-23 (MYSN…GDQS), 489-515 (QLKR…DEFK), and 1340-1365 (ERDA…EENQ). Positions 489–503 (QLKRPQKKVTKRPKR) are enriched in basic residues. Basic and acidic residues-rich tracts occupy residues 504–515 (QKEEDKKEDEFK) and 1340–1359 (ERDA…QSRD).

Its subcellular location is the cell projection. The protein resides in the cilium. In terms of biological role, as component of a spoke-associated complex, regulates ciliary mobility by mediating a stable and functional assembly of the radial spoke 3 (RS3). This chain is Cilia- and flagella-associated protein 61, found in Tetrahymena thermophila (strain SB210).